Consider the following 200-residue polypeptide: Oligoribonuclease (200 aa).

The Exonuclease domain maps to 20–183 (LVWLDMEMTG…ADIHESIDEL (164 aa)). The active site involves Tyr-141.

This sequence belongs to the oligoribonuclease family.

Its subcellular location is the cytoplasm. In terms of biological role, 3'-to-5' exoribonuclease specific for small oligoribonucleotides. This Burkholderia vietnamiensis (strain G4 / LMG 22486) (Burkholderia cepacia (strain R1808)) protein is Oligoribonuclease.